A 757-amino-acid polypeptide reads, in one-letter code: Glutathione biosynthesis bifunctional protein GshAB (757 aa).

Positions 1-337 are glutamate--cysteine ligase; sequence MNIQQIVKEK…LGRARLGEVA (337 aa). Residues 494–757 enclose the ATP-grasp domain; it reads KKVLAKAGFN…VLGMLFPELV (264 aa). Residue 521–580 participates in ATP binding; sequence PLFEGKAVVIKPKSTNFGLGISIFQQGVHDKADFAKAVEIAFREDKEVMVEDYLVGTEYR. Mg(2+)-binding residues include aspartate 702, glutamate 723, and asparagine 725. 3 residues coordinate Mn(2+): aspartate 702, glutamate 723, and asparagine 725.

It in the N-terminal section; belongs to the glutamate--cysteine ligase type 1 family. Type 2 subfamily. Monomer. Requires Mg(2+) as cofactor. The cofactor is Mn(2+).

The enzyme catalyses L-cysteine + L-glutamate + ATP = gamma-L-glutamyl-L-cysteine + ADP + phosphate + H(+). The catalysed reaction is gamma-L-glutamyl-L-cysteine + glycine + ATP = glutathione + ADP + phosphate + H(+). The protein operates within sulfur metabolism; glutathione biosynthesis; glutathione from L-cysteine and L-glutamate: step 1/2. It participates in sulfur metabolism; glutathione biosynthesis; glutathione from L-cysteine and L-glutamate: step 2/2. Synthesizes glutathione from L-glutamate and L-cysteine via gamma-L-glutamyl-L-cysteine. This Mannheimia succiniciproducens (strain KCTC 0769BP / MBEL55E) protein is Glutathione biosynthesis bifunctional protein GshAB.